Consider the following 590-residue polypeptide: Myo-inositol transporter 3A (590 aa).

Over 1–57 (MSATHIENRDDSFLENKGIDHIGRPENNNGSQEPPSPSGFGGHLIDENLVRVEGEDK) the chain is Cytoplasmic. Over residues 15–24 (ENKGIDHIGR) the composition is skewed to basic and acidic residues. A disordered region spans residues 15 to 40 (ENKGIDHIGRPENNNGSQEPPSPSGF). Residues 58–78 (VTWYLCFLISASAIAGFLFGY) form a helical membrane-spanning segment. Residues 79–105 (DTGVVGVALPLVGTDLGGSALNSSQQE) lie on the Extracellular side of the membrane. N-linked (GlcNAc...) asparagine glycosylation occurs at N100. The helical transmembrane segment at 106–126 (IITAGTTIGAIFGSAILGGWG) threads the bilayer. Residues 127-132 (DRLGRK) lie on the Cytoplasmic side of the membrane. The helical transmembrane segment at 133 to 153 (GAILVSDVFFTIGAVIIASSY) threads the bilayer. Over 154 to 157 (SVPQ) the chain is Extracellular. Residues 158–178 (IIVGRIILGIGVGGAAVIAPL) traverse the membrane as a helical segment. At 179 to 192 (FITETAPTAVRGRC) the chain is on the cytoplasmic side. Residues 193–213 (IGVNAFFIPFGQVVSDAIGAG) form a helical membrane-spanning segment. Topologically, residues 214–222 (VQNMHNGWR) are extracellular. The chain crosses the membrane as a helical span at residues 223 to 243 (LLFALGAVPSLLQLLLFHYLP). Residues 244 to 325 (ESPRILILKG…AVSALQAAGQ (82 aa)) lie on the Cytoplasmic side of the membrane. The helical transmembrane segment at 326-346 (LTGFNTLLYYAGTLFGLLGLS) threads the bilayer. Residues 347–349 (NPA) are Extracellular-facing. A helical membrane pass occupies residues 350–370 (LGGLIPAGTNAVFVLIGMSLV). Residues 371–376 (DKVGRR) are Cytoplasmic-facing. The chain crosses the membrane as a helical span at residues 377-397 (GLLLIGVPIMLLGHVWNIVSF). Residues 398–420 (YYMCKPTGGFLDTSYSYDTTDVG) are Extracellular-facing. A helical transmembrane segment spans residues 421–441 (IVIGGIVFFVVGYGLTYSHLV). Residues 442–455 (WYQAEYLTLEVRSM) are Cytoplasmic-facing. A helical membrane pass occupies residues 456 to 476 (GSGIATTVCWIANLVVSVSYL). Topologically, residues 477 to 485 (SELETMTPS) are extracellular. The chain crosses the membrane as a helical span at residues 486 to 506 (GTYGFYFGISVIGFVFLVFCL). Residues 507–590 (PETKQLSIDE…GGKRTPSASV (84 aa)) lie on the Cytoplasmic side of the membrane.

Belongs to the major facilitator superfamily. Sugar transporter (TC 2.A.1.1) family.

The protein localises to the cell membrane. It carries out the reaction myo-inositol(out) + H(+)(out) = myo-inositol(in) + H(+)(in). In terms of biological role, transporter for myo-inositol. In Cryptococcus neoformans var. grubii serotype A (strain H99 / ATCC 208821 / CBS 10515 / FGSC 9487) (Filobasidiella neoformans var. grubii), this protein is Myo-inositol transporter 3A (ITR3A).